The sequence spans 201 residues: 3-isopropylmalate dehydratase small subunit (201 aa).

It belongs to the LeuD family. LeuD type 1 subfamily. As to quaternary structure, heterodimer of LeuC and LeuD.

The enzyme catalyses (2R,3S)-3-isopropylmalate = (2S)-2-isopropylmalate. The protein operates within amino-acid biosynthesis; L-leucine biosynthesis; L-leucine from 3-methyl-2-oxobutanoate: step 2/4. In terms of biological role, catalyzes the isomerization between 2-isopropylmalate and 3-isopropylmalate, via the formation of 2-isopropylmaleate. This Shewanella amazonensis (strain ATCC BAA-1098 / SB2B) protein is 3-isopropylmalate dehydratase small subunit.